We begin with the raw amino-acid sequence, 225 residues long: Ribosomal RNA small subunit methyltransferase G (225 aa).

Residues glycine 69, 119–120 (AE), and arginine 136 each bind S-adenosyl-L-methionine.

The protein belongs to the methyltransferase superfamily. RNA methyltransferase RsmG family.

The protein resides in the cytoplasm. In terms of biological role, specifically methylates the N7 position of a guanine in 16S rRNA. The protein is Ribosomal RNA small subunit methyltransferase G of Pseudothermotoga lettingae (strain ATCC BAA-301 / DSM 14385 / NBRC 107922 / TMO) (Thermotoga lettingae).